The sequence spans 132 residues: MSKTLNIIWQYLRAFVLIYACLYAGIFIASLLPVTIPGSIIGMLILFVLLALQILPAKWVNPGCYVLIRYMALLFVPIGVGVMQYFDLLRAQFGPVVVSCAVSTLVVFLVVSWSSQLVHGERKVVGQKGSEE.

4 helical membrane passes run 7 to 27, 31 to 51, 63 to 83, and 93 to 113; these read IIWQ…AGIF, LLPV…VLLA, GCYV…VGVM, and FGPV…VVSW.

Belongs to the UPF0299 family.

The protein localises to the cell inner membrane. This Shigella boydii serotype 4 (strain Sb227) protein is UPF0299 membrane protein YohJ.